The primary structure comprises 137 residues: Putative pre-16S rRNA nuclease (137 aa).

Belongs to the YqgF nuclease family.

It localises to the cytoplasm. Functionally, could be a nuclease involved in processing of the 5'-end of pre-16S rRNA. This is Putative pre-16S rRNA nuclease from Oceanobacillus iheyensis (strain DSM 14371 / CIP 107618 / JCM 11309 / KCTC 3954 / HTE831).